A 402-amino-acid polypeptide reads, in one-letter code: Glutamate N-acetyltransferase (402 aa).

Positions 151, 178, 189, 267, 397, and 402 each coordinate substrate. The active-site Nucleophile is the threonine 189.

The protein belongs to the ArgJ family. In terms of assembly, heterotetramer of two alpha and two beta chains.

The protein localises to the cytoplasm. It catalyses the reaction N(2)-acetyl-L-ornithine + L-glutamate = N-acetyl-L-glutamate + L-ornithine. It participates in amino-acid biosynthesis; L-arginine biosynthesis; L-ornithine and N-acetyl-L-glutamate from L-glutamate and N(2)-acetyl-L-ornithine (cyclic): step 1/1. In terms of biological role, catalyzes the transfer of the acetyl group from N(2)-acetylornithine to glutamate, forming N-acetylglutamate and L-ornithine. The polypeptide is Glutamate N-acetyltransferase (Methanothermobacter thermautotrophicus (strain ATCC 29096 / DSM 1053 / JCM 10044 / NBRC 100330 / Delta H) (Methanobacterium thermoautotrophicum)).